A 460-amino-acid polypeptide reads, in one-letter code: UDP-N-acetylmuramate--L-alanine ligase (460 aa).

Position 118-124 (118-124) interacts with ATP; that stretch reads GTHGKTT.

Belongs to the MurCDEF family.

The protein localises to the cytoplasm. The catalysed reaction is UDP-N-acetyl-alpha-D-muramate + L-alanine + ATP = UDP-N-acetyl-alpha-D-muramoyl-L-alanine + ADP + phosphate + H(+). It participates in cell wall biogenesis; peptidoglycan biosynthesis. In terms of biological role, cell wall formation. In Gloeobacter violaceus (strain ATCC 29082 / PCC 7421), this protein is UDP-N-acetylmuramate--L-alanine ligase.